Reading from the N-terminus, the 464-residue chain is Trigger factor (464 aa).

The region spanning 169–256 (GDVAIVDYRG…MKELKAKELP (88 aa)) is the PPIase FKBP-type domain.

This sequence belongs to the FKBP-type PPIase family. Tig subfamily.

Its subcellular location is the cytoplasm. It carries out the reaction [protein]-peptidylproline (omega=180) = [protein]-peptidylproline (omega=0). Its function is as follows. Involved in protein export. Acts as a chaperone by maintaining the newly synthesized protein in an open conformation. Functions as a peptidyl-prolyl cis-trans isomerase. The protein is Trigger factor of Microcystis aeruginosa (strain NIES-843 / IAM M-2473).